A 129-amino-acid chain; its full sequence is MAKPAARPRKKVKKTVVDGIAHIHASFNNTIVTITDRQGNALSWATSGGSGFRGSRKSTPFAAQVAAERAGQAALEYGLKNLDVNVKGPGPGRESAVRALNACGYKIASITDVTPIPHNGCRPPKKRRV.

It belongs to the universal ribosomal protein uS11 family. As to quaternary structure, part of the 30S ribosomal subunit. Interacts with proteins S7 and S18. Binds to IF-3.

Located on the platform of the 30S subunit, it bridges several disparate RNA helices of the 16S rRNA. Forms part of the Shine-Dalgarno cleft in the 70S ribosome. The chain is Small ribosomal subunit protein uS11 from Azotobacter vinelandii (strain DJ / ATCC BAA-1303).